The following is a 1939-amino-acid chain: Myosin-8 (1939 aa).

Residues 35–84 form the Myosin N-terminal SH3-like domain; sequence DAKTSVFVAEPKASYVKSTIQSKEGGKVTVKTEGGATLTVREDQVFPMNP. Phosphothreonine is present on residues Thr66 and Thr71. Positions 88–783 constitute a Myosin motor domain; that stretch reads DKIEDMAMMT…LLGLLEEMRD (696 aa). Lys132 bears the N6,N6,N6-trimethyllysine mark. 181-188 lines the ATP pocket; the sequence is GESGAGKT. Tyr391 is subject to Phosphotyrosine. Thr421 is modified (phosphothreonine). Tyr426 carries the post-translational modification Phosphotyrosine. Ser627 is modified (phosphoserine). The actin-binding stretch occupies residues 660–682; it reads LNKLMTNLRSTHPHFVRCIIPNE. His758 bears the Pros-methylhistidine mark. The tract at residues 762 to 776 is actin-binding; sequence KFGHTKVFFKAGLLG. Residues 783–815 enclose the IQ domain; sequence DEKLSQIITRTQAVCRGFLMRVEYQKMLQRREA. The stretch at 844–1939 forms a coiled coil; it reads LLKSAETEKE…REVHTKISAE (1096 aa). A phosphoserine mark is found at Ser1093, Ser1097, Ser1163, and Ser1238. Thr1242 carries the phosphothreonine modification. Ser1244 carries the post-translational modification Phosphoserine. Phosphothreonine is present on Thr1256. Ser1262 is modified (phosphoserine). A phosphothreonine mark is found at Thr1266 and Thr1287. Phosphoserine occurs at positions 1293, 1304, and 1307. Tyr1465 carries the post-translational modification Phosphotyrosine. Thr1468 carries the phosphothreonine modification. Position 1475 is a phosphoserine (Ser1475). Tyr1493 carries the post-translational modification Phosphotyrosine. Ser1496 is modified (phosphoserine). Thr1502 carries the post-translational modification Phosphothreonine. At Ser1515 the chain carries Phosphoserine. Position 1518 is a phosphothreonine (Thr1518). Ser1555, Ser1575, Ser1601, Ser1604, Ser1715, and Ser1727 each carry phosphoserine. Position 1731 is a phosphothreonine (Thr1731). Ser1740 is subject to Phosphoserine.

It belongs to the TRAFAC class myosin-kinesin ATPase superfamily. Myosin family. As to quaternary structure, muscle myosin is a hexameric protein that consists of 2 heavy chain subunits (MHC), 2 alkali light chain subunits (MLC) and 2 regulatory light chain subunits (MLC-2).

Its subcellular location is the cytoplasm. The protein localises to the myofibril. Muscle contraction. The chain is Myosin-8 (MYH8) from Canis lupus familiaris (Dog).